The following is a 317-amino-acid chain: Transaldolase (317 aa).

The Schiff-base intermediate with substrate role is filled by Lys132.

Belongs to the transaldolase family. Type 1 subfamily. Homodimer.

The protein resides in the cytoplasm. The enzyme catalyses D-sedoheptulose 7-phosphate + D-glyceraldehyde 3-phosphate = D-erythrose 4-phosphate + beta-D-fructose 6-phosphate. Its pathway is carbohydrate degradation; pentose phosphate pathway; D-glyceraldehyde 3-phosphate and beta-D-fructose 6-phosphate from D-ribose 5-phosphate and D-xylulose 5-phosphate (non-oxidative stage): step 2/3. Functionally, transaldolase is important for the balance of metabolites in the pentose-phosphate pathway. This chain is Transaldolase, found in Shewanella denitrificans (strain OS217 / ATCC BAA-1090 / DSM 15013).